A 77-amino-acid chain; its full sequence is Conotoxin VnMEKL-0223 (77 aa).

Residues 1–19 (MQKLTILLLVAAVLMSTQA) form the signal peptide. The propeptide occupies 20–37 (LIKGGGEKRPKEKIKFLS). 3 disulfides stabilise this stretch: Cys-51–Cys-65, Cys-58–Cys-69, and Cys-64–Cys-74.

The protein belongs to the conotoxin O2 superfamily. In terms of tissue distribution, expressed by the venom duct.

It is found in the secreted. The protein is Conotoxin VnMEKL-0223 of Conus ventricosus (Mediterranean cone).